A 294-amino-acid chain; its full sequence is 4-hydroxy-tetrahydrodipicolinate synthase (294 aa).

Thr44 provides a ligand contact to pyruvate. The active-site Proton donor/acceptor is Tyr132. Lys160 acts as the Schiff-base intermediate with substrate in catalysis. Pyruvate is bound at residue Ile205.

This sequence belongs to the DapA family. Homotetramer; dimer of dimers.

It is found in the cytoplasm. It carries out the reaction L-aspartate 4-semialdehyde + pyruvate = (2S,4S)-4-hydroxy-2,3,4,5-tetrahydrodipicolinate + H2O + H(+). It participates in amino-acid biosynthesis; L-lysine biosynthesis via DAP pathway; (S)-tetrahydrodipicolinate from L-aspartate: step 3/4. In terms of biological role, catalyzes the condensation of (S)-aspartate-beta-semialdehyde [(S)-ASA] and pyruvate to 4-hydroxy-tetrahydrodipicolinate (HTPA). This chain is 4-hydroxy-tetrahydrodipicolinate synthase, found in Kosmotoga olearia (strain ATCC BAA-1733 / DSM 21960 / TBF 19.5.1).